The primary structure comprises 351 residues: Leukotriene B4 receptor 1 (351 aa).

Residues 1–21 (MAANTTSTAATSSPGGMSLSL) are Extracellular-facing. Asn-4 is a glycosylation site (N-linked (GlcNAc...) asparagine). A helical membrane pass occupies residues 22–44 (LPIVLLSVALVVGLPGNSFVVWS). Over 45 to 56 (ILKRMQKRSVTA) the chain is Cytoplasmic. A helical membrane pass occupies residues 57–77 (LLVLNLALADLAVLLTAPFFL). Residues 78–93 (HFLARGTWSFEVTGCR) are Extracellular-facing. A helical membrane pass occupies residues 94–115 (LCHYVCGVSMYASVLLITIMSL). The Cytoplasmic portion of the chain corresponds to 116 to 140 (DRSLAVARPFVSQKVRTKAFARWVL). A helical membrane pass occupies residues 141–161 (AGIWVVSFLLAIPVLVYRTVT). Residues 162–179 (PKNKTLICDSRYPSDGHK) are Extracellular-facing. Asn-164 is a glycosylation site (N-linked (GlcNAc...) asparagine). A helical transmembrane segment spans residues 180-200 (VFHLLFEAITGFLLPFLAVVA). The Cytoplasmic portion of the chain corresponds to 201 to 222 (SYSDIGRRLQARRFRRSRRTGR). A helical membrane pass occupies residues 223-243 (LVVLIILAFAAFWLPYHLVNL). At 244-268 (VEAGRTLAGWDKNSPAGQRLKLARY) the chain is on the extracellular side. Residues 269 to 289 (VLIALAFLSSSVNPVLYACAG) traverse the membrane as a helical segment. At 290–351 (GGLLRSAGVG…TSSTPPESSK (62 aa)) the chain is on the cytoplasmic side. Polar residues-rich tracts occupy residues 311-327 (EVSS…TPKA) and 339-351 (SFMT…ESSK). The interval 311 to 351 (EVSSTRRGGTLVQTPKATPTCPEPGPTDSFMTSSTPPESSK) is disordered.

This sequence belongs to the G-protein coupled receptor 1 family. In terms of processing, phosphorylated by GRK6 upon leukotriene B4 binding; which promotes desensitization. Exclusively expressed in polymorphonuclear leukocytes.

It localises to the cell membrane. Its function is as follows. Receptor for leukotriene B4, a potent chemoattractant involved in inflammation and immune response. This is Leukotriene B4 receptor 1 (Ltb4r) from Rattus norvegicus (Rat).